Here is a 900-residue protein sequence, read N- to C-terminus: Translation initiation factor IF-2 (900 aa).

Positions 48–310 (HLNRDRGNAP…KPSSLQQSFN (263 aa)) are disordered. Polar residues predominate over residues 68–82 (STLNVPSTGGKSKSV). Composition is skewed to basic and acidic residues over residues 85–98 (EVRK…RDPI) and 108–164 (QARR…KEKV). A compositionally biased stretch (polar residues) spans 165–176 (TNQQNENMTKPA). Basic and acidic residues predominate over residues 177 to 237 (QSEKAKREAE…SATKPEESAD (61 aa)). Basic residues predominate over residues 263-277 (TRTRAAKVTKQKKGN). Residues 278 to 291 (RQSESKADREEARA) show a composition bias toward basic and acidic residues. The tr-type G domain occupies 399 to 568 (FRAPVVTIMG…LLQAEVLELK (170 aa)). A G1 region spans residues 408–415 (GHVDHGKT). 408–415 (GHVDHGKT) contacts GTP. Residues 433–437 (GITQH) are G2. The segment at 454 to 457 (DTPG) is G3. Residues 454–458 (DTPGH) and 508–511 (NKID) contribute to the GTP site. Residues 508 to 511 (NKID) are G4. Positions 544 to 546 (SAK) are G5.

The protein belongs to the TRAFAC class translation factor GTPase superfamily. Classic translation factor GTPase family. IF-2 subfamily.

It localises to the cytoplasm. Its function is as follows. One of the essential components for the initiation of protein synthesis. Protects formylmethionyl-tRNA from spontaneous hydrolysis and promotes its binding to the 30S ribosomal subunits. Also involved in the hydrolysis of GTP during the formation of the 70S ribosomal complex. This is Translation initiation factor IF-2 from Pectobacterium atrosepticum (strain SCRI 1043 / ATCC BAA-672) (Erwinia carotovora subsp. atroseptica).